Reading from the N-terminus, the 349-residue chain is RING-H2 finger protein ATL48 (349 aa).

The HIG1 domain occupies 1-85; the sequence is MSSVEPDMED…DNPWKKLLLS (85 aa). Position 2 is an N-acetylserine (Ser2). Transmembrane regions (helical) follow at residues 21 to 41, 55 to 75, and 121 to 141; these read PLVPLGALMTAGVLTAGLISF, ARVVVQGATVALMVGTGYYYG, and CLVISGLALIIVFLGVLYLIF. Residues 207-249 form an RING-type; atypical zinc finger; the sequence is CAVCLNEFSDTDKLRLLPVCSHAFHLHCIDTWLLSNSTCPLCR.

It belongs to the RING-type zinc finger family. ATL subfamily.

The protein resides in the membrane. The enzyme catalyses S-ubiquitinyl-[E2 ubiquitin-conjugating enzyme]-L-cysteine + [acceptor protein]-L-lysine = [E2 ubiquitin-conjugating enzyme]-L-cysteine + N(6)-ubiquitinyl-[acceptor protein]-L-lysine.. The protein operates within protein modification; protein ubiquitination. The sequence is that of RING-H2 finger protein ATL48 (ATL48) from Arabidopsis thaliana (Mouse-ear cress).